Consider the following 209-residue polypeptide: Auxin-binding protein ABP19a (209 aa).

A signal peptide spans methionine 1–alanine 18. An intrachain disulfide couples cysteine 24 to cysteine 39. The Cupin type-1 domain maps to serine 53–lysine 199. Asparagine 60 is a glycosylation site (N-linked (GlcNAc...) asparagine). Residues histidine 101, histidine 103, glutamate 108, and histidine 147 each contribute to the Mn(2+) site.

Belongs to the germin family. As to quaternary structure, interacts with ABP20.

The protein resides in the secreted. It is found in the extracellular space. It localises to the apoplast. Its subcellular location is the cell wall. Its function is as follows. Probable receptor for the plant growth-promoting hormone auxin. The protein is Auxin-binding protein ABP19a (ABP19A) of Prunus persica (Peach).